The chain runs to 723 residues: Catalase-peroxidase (723 aa).

An N-terminal signal peptide occupies residues 1–29 (MDGNDLVENKCPVMHGGITVAGHSNTAWW). The tryptophyl-tyrosyl-methioninium (Trp-Tyr) (with M-251) cross-link spans 97–225 (WHSAGSYRLA…LAAVQMGLIY (129 aa)). The active-site Proton acceptor is His-98. Residues 225–251 (YVNPEGVNGKSDPLKSAAQVRETFARM) constitute a cross-link (tryptophyl-tyrosyl-methioninium (Tyr-Met) (with W-97)). His-266 provides a ligand contact to heme b.

This sequence belongs to the peroxidase family. Peroxidase/catalase subfamily. As to quaternary structure, homodimer or homotetramer. The cofactor is heme b. In terms of processing, formation of the three residue Trp-Tyr-Met cross-link is important for the catalase, but not the peroxidase activity of the enzyme.

The enzyme catalyses H2O2 + AH2 = A + 2 H2O. It catalyses the reaction 2 H2O2 = O2 + 2 H2O. Bifunctional enzyme with both catalase and broad-spectrum peroxidase activity. The chain is Catalase-peroxidase from Hyphomonas neptunium (strain ATCC 15444).